Here is a 130-residue protein sequence, read N- to C-terminus: Small ribosomal subunit protein uS11 (130 aa).

This sequence belongs to the universal ribosomal protein uS11 family. In terms of assembly, part of the 30S ribosomal subunit. Interacts with proteins S7 and S18. Binds to IF-3.

Functionally, located on the platform of the 30S subunit, it bridges several disparate RNA helices of the 16S rRNA. Forms part of the Shine-Dalgarno cleft in the 70S ribosome. The protein is Small ribosomal subunit protein uS11 of Helicobacter hepaticus (strain ATCC 51449 / 3B1).